The following is a 331-amino-acid chain: Polysaccharide lyase (331 aa).

The N-terminal stretch at 1–22 (MSLPLRLALLPTLLASASAFAA) is a signal peptide. Residue C23 is the site of N-palmitoyl cysteine attachment. C23 carries S-diacylglycerol cysteine lipidation.

Belongs to the polysaccharide lyase 5 family.

It localises to the cell outer membrane. It carries out the reaction Eliminative cleavage of alginate to give oligosaccharides with 4-deoxy-alpha-L-erythro-hex-4-enuronosyl groups at their non-reducing ends and beta-D-mannuronate at their reducing end.. It catalyses the reaction [hyaluronan](n) = n 3-(4-deoxy-beta-D-gluc-4-enuronosyl)-N-acetyl-D-glucosamine + H2O. The enzyme catalyses Eliminative cleavage of (1-&gt;4)-beta-D-glucuronans to give oligosaccharides with 4-deoxy-beta-D-gluc-4-enuronosyl groups at their non-reducing ends. Complete degradation of glucuronans results in the formation of tetrasaccharides.. Is inhibited by mono- and divalent cations as well as L-ascorbic acid 6-hexadecanoate. Polysaccharide lyase that catalyzes the depolymerization of several anionic polysaccharides via a beta-elimination mechanism. Exhibits broad substrate specificity, catalyzing the degradation of not only alginate and poly-beta-D-mannuronate (poly-ManA), but poly-beta-D-glucuronate (poly-GlcA or poly-GlcUA) and hyaluronate (HA) as well. The oligosaccharide products formed by enzymatic cleavage are comprised mainly of disaccharides, with a lower abundance of trimers and pentamers. Is not active on poly-D-galacturonate, heparin and heparin sulfate. The chain is Polysaccharide lyase from Stenotrophomonas maltophilia (strain K279a).